Consider the following 153-residue polypeptide: Guanyl-specific ribonuclease N1 (153 aa).

Residues 1 to 20 (MVQLLSAFVSLLSVVAVSGA) form the signal peptide. Positions 21–49 (AIPAPAPEAVVDVAPETATIEPTGNFTAQ) are excised as a propeptide. 2 disulfide bridges follow: Cys51-Cys59 and Cys55-Cys152. His89 is an active-site residue. Catalysis depends on Glu107, which acts as the Proton acceptor. The active-site Proton donor is His141.

It belongs to the ribonuclease N1/T1 family.

The enzyme catalyses [RNA] containing guanosine + H2O = an [RNA fragment]-3'-guanosine-3'-phosphate + a 5'-hydroxy-ribonucleotide-3'-[RNA fragment].. This Neurospora crassa (strain ATCC 24698 / 74-OR23-1A / CBS 708.71 / DSM 1257 / FGSC 987) protein is Guanyl-specific ribonuclease N1 (grn).